A 1062-amino-acid chain; its full sequence is Suppressor of mar1-1 protein (1062 aa).

A compositionally biased stretch (polar residues) spans 1–17 (MSENTTAPSDNITNEQR). Disordered stretches follow at residues 1-27 (MSEN…DDVD), 188-217 (ENSS…ASTS), 267-337 (TKQE…KKRT), 370-398 (SSKF…SATQ), 595-634 (EIST…QQEG), and 681-804 (SGEE…GNLG). N-acetylserine is present on Ser-2. The span at 189–205 (NSSNNTSSQHNTSSSRR) shows a compositional bias: low complexity. 3 stretches are compositionally biased toward polar residues: residues 267-279 (TKQE…APSS), 287-298 (SLTSVPQRTNNE), and 305-323 (STAN…NNLI). The segment covering 325-335 (IKRKRGRPPKK) has biased composition (basic residues). Polar residues-rich tracts occupy residues 370-385 (SSKF…NPVS) and 610-629 (TKGS…GISD). A phosphoserine mark is found at Ser-378, Ser-379, Ser-628, and Ser-681. A compositionally biased stretch (basic and acidic residues) spans 685–699 (AITKENAEYERKTPG). The residue at position 697 (Thr-697) is a Phosphothreonine. Over residues 704-716 (TTFVPLENSQPSD) the composition is skewed to polar residues. The residue at position 712 (Ser-712) is a Phosphoserine; by ATM or ATR. Phosphoserine is present on Ser-738. A compositionally biased stretch (polar residues) spans 781 to 793 (KGTSSIHNDTESA). Thr-817 bears the Phosphothreonine mark.

In terms of assembly, interacts with RFM1. This interaction is required to recruit HST1.

It is found in the nucleus. Its function is as follows. DNA-binding protein that specifically binds the regulatory region of middle sporulation genes (MSE). Required for the repression of middle sporulation genes during vegetative growth. Represses expression via the recruitment of histone deacetylase HST1. This is Suppressor of mar1-1 protein (SUM1) from Saccharomyces cerevisiae (strain ATCC 204508 / S288c) (Baker's yeast).